The chain runs to 263 residues: MALVKGVAQSQTRPLAFHGEQWTPRALFTVFGAFRASKDYAKLIEFLTNNFACYVKNKTFNFAGTGHLFHSLYAFVPNVSELVKERKQIRLQIDCVMRLFKNTTNDFKMYVELFAFIDAHGGAECPCLLLQQSKLNAVSFVENLNCKLFDIKPPKFKKEPFDSILSKYSLNYKALCFKKKEKCTVGCVTKRQKKMKRRQLLSDRVIYLHNKNDVLDERTLLHGPSGTSLAPCLHRYATVERQTRAGDEMVSFIRYCELCQMRA.

Belongs to the baculoviridae LEF-5 family.

Its function is as follows. Required for late and very late gene expression. The chain is Late expression factor 5 (LEF-5) from Orgyia pseudotsugata (Douglas-fir tussock moth).